The sequence spans 327 residues: L-lactate dehydrogenase 1 (327 aa).

NAD(+) contacts are provided by residues valine 21, aspartate 42, lysine 47, tyrosine 72, and 86-87 (GA). Substrate contacts are provided by residues glutamine 89, arginine 95, and 127 to 130 (NPVD). NAD(+)-binding positions include 125-127 (AAN) and serine 150. 155 to 158 (DSAR) serves as a coordination point for substrate. Beta-D-fructose 1,6-bisphosphate contacts are provided by arginine 160 and histidine 175. The active-site Proton acceptor is the histidine 182. Phosphotyrosine is present on tyrosine 227. Residue threonine 236 participates in substrate binding.

It belongs to the LDH/MDH superfamily. LDH family. In terms of assembly, homotetramer.

The protein localises to the cytoplasm. The enzyme catalyses (S)-lactate + NAD(+) = pyruvate + NADH + H(+). Its pathway is fermentation; pyruvate fermentation to lactate; (S)-lactate from pyruvate: step 1/1. With respect to regulation, allosterically activated by fructose 1,6-bisphosphate (FBP). Catalyzes the conversion of lactate to pyruvate. This Enterococcus faecalis (strain ATCC 700802 / V583) protein is L-lactate dehydrogenase 1.